The sequence spans 133 residues: ATP synthase epsilon chain (133 aa).

This sequence belongs to the ATPase epsilon chain family. In terms of assembly, F-type ATPases have 2 components, CF(1) - the catalytic core - and CF(0) - the membrane proton channel. CF(1) has five subunits: alpha(3), beta(3), gamma(1), delta(1), epsilon(1). CF(0) has three main subunits: a, b and c.

The protein localises to the cell membrane. In terms of biological role, produces ATP from ADP in the presence of a proton gradient across the membrane. This Mycoplasma genitalium (strain ATCC 33530 / DSM 19775 / NCTC 10195 / G37) (Mycoplasmoides genitalium) protein is ATP synthase epsilon chain (atpC).